Consider the following 78-residue polypeptide: Xibalbin-13 1 (78 aa).

An N-terminal signal peptide occupies residues 1–27 (MKEANTRRYIHLCLVVVLVSTIITTEA). The propeptide occupies 28-31 (EDDR). 4 disulfide bridges follow: cysteine 34–cysteine 49, cysteine 41–cysteine 54, cysteine 48–cysteine 65, and cysteine 56–cysteine 63. At serine 76 the chain carries Serine amide.

The protein belongs to the xibalbin-13 family. In terms of tissue distribution, expressed by the venom gland.

It localises to the secreted. Probable neurotoxin. Strongly inhibits voltage-gated potassium channels (Kv1.1/KCNA1, Kv1.2/KCNA2, Kv1.3/KCNA3, and Kv1.6/KCNA6) and mildly inhibits sodium channels (Nav1.2/SCN2A, Nav1.4/SCN4A, Nav1.5/SCN5A, Nav1.6/SCN8A, and BgNav). Induces activation of protein kinase A type II (PKA-II) and MAP kinase Erk1/2 in primary nociceptive and non-nociceptive sensory neurons. Does not show cytotoxic activity. Does not have an impact on Ca2+, cAMP, and NO signaling in the cell types analyzed. Does not interfere with the adhesion of leukocytes to endothelial cells. This Xibalbanus tulumensis (Blind cave remipede) protein is Xibalbin-13 1.